We begin with the raw amino-acid sequence, 329 residues long: Phosphate acyltransferase (329 aa).

This sequence belongs to the PlsX family. In terms of assembly, homodimer. Probably interacts with PlsY.

It is found in the cytoplasm. The catalysed reaction is a fatty acyl-[ACP] + phosphate = an acyl phosphate + holo-[ACP]. It participates in lipid metabolism; phospholipid metabolism. Functionally, catalyzes the reversible formation of acyl-phosphate (acyl-PO(4)) from acyl-[acyl-carrier-protein] (acyl-ACP). This enzyme utilizes acyl-ACP as fatty acyl donor, but not acyl-CoA. This Exiguobacterium sp. (strain ATCC BAA-1283 / AT1b) protein is Phosphate acyltransferase.